A 161-amino-acid chain; its full sequence is RuBisCO chaperone RbcX (161 aa).

2 disordered regions span residues 1–20 (MQFM…KPME) and 130–161 (LGAE…SHAD). Positions 147–161 (DSATPDDASNASHAD) are enriched in polar residues.

It belongs to the RbcX family. Homodimer. Interacts with the exposed C-terminal peptide of endogenous RbcL ('Lys-460-Asp-470') via its central cleft, as well as C-terminal peptides from other cyanobacterial RbcL. Contacts a second RbcL monomer via its peripheral polar surface.

Its subcellular location is the carboxysome. It is found in the cytoplasm. An RbcL-specific chaperone. The central cleft of the RbcX homodimer (RbcX2) binds the C-terminus of an RbcL monomer, stabilizing the C-terminus and probably preventing its reassociation with chaperonin GroEL-ES. At the same time the peripheral region of RbcX2 binds a second RbcL monomer, bridging the RbcL homodimers in the correct orientation. The RbcX2(2)-bound RbcL dimers then assemble into the RbcL8 core (RbcL8-(RbcX2)8). RbcS binding triggers the release of RbcX2. The chain is RuBisCO chaperone RbcX from Synechococcus sp. (strain ATCC 27144 / PCC 6301 / SAUG 1402/1) (Anacystis nidulans).